Here is a 235-residue protein sequence, read N- to C-terminus: MGQKINPIGLRLGINRTWDSRWFAGKNEYGKLLHEDVKIREILHKELKQAAVARIVIERPHKKCRVTIHSARPGVVIGKKGADIDKLRKKVADITSSDVVINIVEIRKPELDATLVAESIAQQLERRVAFRRAMKRAVQSAMRLGAEGIRINCSGRLGGAEIARMEWYREGRVPLHTLRADIDYGVATAFTTFGTCGVKVWIFKGEILEHDPMAQDKRMAESDGGGSSRPRRDAA.

Positions 39–107 (IREILHKELK…DVVINIVEIR (69 aa)) constitute a KH type-2 domain. A disordered region spans residues 215–235 (QDKRMAESDGGGSSRPRRDAA).

This sequence belongs to the universal ribosomal protein uS3 family. As to quaternary structure, part of the 30S ribosomal subunit. Forms a tight complex with proteins S10 and S14.

Its function is as follows. Binds the lower part of the 30S subunit head. Binds mRNA in the 70S ribosome, positioning it for translation. This is Small ribosomal subunit protein uS3 from Rhodopseudomonas palustris (strain TIE-1).